Reading from the N-terminus, the 197-residue chain is Probable GTP-binding protein EngB (197 aa).

The EngB-type G domain occupies 22–195 (ELPEVALAGR…WKAIYALITE (174 aa)). GTP is bound by residues 30-37 (GRSNVGKS), 57-61 (GKTQT), 75-78 (DVPG), 142-145 (TKLD), and 174-176 (FSA). 2 residues coordinate Mg(2+): serine 37 and threonine 59.

This sequence belongs to the TRAFAC class TrmE-Era-EngA-EngB-Septin-like GTPase superfamily. EngB GTPase family. Mg(2+) serves as cofactor.

Functionally, necessary for normal cell division and for the maintenance of normal septation. The polypeptide is Probable GTP-binding protein EngB (Exiguobacterium sp. (strain ATCC BAA-1283 / AT1b)).